We begin with the raw amino-acid sequence, 290 residues long: Putative transport permease ycf38 (290 aa).

A run of 7 helical transmembrane segments spans residues 21 to 41 (VTSFFFIQELFVLVKRLFIQL), 46 to 66 (ITLISGILQPLLWLILFGALF), 86 to 106 (PGILVFTAFAGSLNSSLPLIF), 133 to 153 (FFISVLSFIQVFFIMLFGVFL), 167 to 187 (FFFLFLLIIGITTFSILLALL), 194 to 213 (LIAVIFVLNLPLLFSSTALA), and 261 to 281 (INIGQSLIILIIFDLVGFLLF). Residues 46–284 (ITLISGILQP…LVGFLLFKKI (239 aa)) enclose the ABC transmembrane type-2 domain.

It belongs to the ABC-2 integral membrane protein family.

The protein localises to the plastid. Its subcellular location is the cyanelle membrane. This is Putative transport permease ycf38 (ycf38) from Cyanophora paradoxa.